Reading from the N-terminus, the 264-residue chain is ATP synthase subunit a (264 aa).

The next 6 membrane-spanning stretches (helical) occupy residues 29–49, 87–107, 134–154, 177–197, 208–228, and 235–255; these read TWHI…LWIF, NALI…MNFM, DVNI…YYSI, IPVN…SLAL, LIFI…SLGV, and LIFH…LTIV.

It belongs to the ATPase A chain family. F-type ATPases have 2 components, CF(1) - the catalytic core - and CF(0) - the membrane proton channel. CF(1) has five subunits: alpha(3), beta(3), gamma(1), delta(1), epsilon(1). CF(0) has three main subunits: a(1), b(2) and c(9-12). The alpha and beta chains form an alternating ring which encloses part of the gamma chain. CF(1) is attached to CF(0) by a central stalk formed by the gamma and epsilon chains, while a peripheral stalk is formed by the delta and b chains.

It is found in the cell inner membrane. In terms of biological role, key component of the proton channel; it plays a direct role in the translocation of protons across the membrane. In Shewanella sp. (strain ANA-3), this protein is ATP synthase subunit a.